The primary structure comprises 61 residues: Protein DDR2 (61 aa).

The N-terminal stretch at 1-22 is a signal peptide; the sequence is MKVSQVFISAISVFGLATSVNA. 2 N-linked (GlcNAc...) asparagine glycosylation sites follow: N24 and N27.

It to yeast HOR7.

In terms of biological role, may play an important role in the response of cells to diverse environmental stresses. The chain is Protein DDR2 (DDR2) from Saccharomyces cerevisiae (strain ATCC 204508 / S288c) (Baker's yeast).